The following is an 89-amino-acid chain: Small ribosomal subunit protein uS15 (89 aa).

The protein belongs to the universal ribosomal protein uS15 family. In terms of assembly, part of the 30S ribosomal subunit. Forms a bridge to the 50S subunit in the 70S ribosome, contacting the 23S rRNA.

In terms of biological role, one of the primary rRNA binding proteins, it binds directly to 16S rRNA where it helps nucleate assembly of the platform of the 30S subunit by binding and bridging several RNA helices of the 16S rRNA. Functionally, forms an intersubunit bridge (bridge B4) with the 23S rRNA of the 50S subunit in the ribosome. The sequence is that of Small ribosomal subunit protein uS15 from Gluconobacter oxydans (strain 621H) (Gluconobacter suboxydans).